The chain runs to 694 residues: Cyclic nucleotide-gated ion channel 4 (694 aa).

The segment covering 1 to 15 (MATEQEFTRASRFSR) has biased composition (basic and acidic residues). The segment at 1–64 (MATEQEFTRA…RIGLTCGGRR (64 aa)) is disordered. Residues 1-92 (MATEQEFTRA…RSKWVREWNK (92 aa)) lie on the Cytoplasmic side of the membrane. Residues 24 to 53 (SEEDNTEEEDEEEEEMEEIEEEEEEEEEED) show a composition bias toward acidic residues. Residues 93 to 113 (VFLLVCATGLFVDPLFLYTLS) traverse the membrane as a helical segment. At 114–126 (VSDTCMCLLVDGW) the chain is on the extracellular side. A helical membrane pass occupies residues 127–147 (LALTVTALRSMTDLLHLWNIW). The Cytoplasmic portion of the chain corresponds to 148-187 (IQFKIARRWPYPGGDSDGDTNKGGGTRGSTRVAPPYVKKN). Residues 188–208 (GFFFDLFVILPLPQVVLWVVI) form a helical membrane-spanning segment. The Extracellular segment spans residues 209–216 (PSLLKRGS). Residues 217–237 (VTLVVSVLLVTFLFQYLPKIY) traverse the membrane as a helical segment. Residues 238 to 251 (HSIRHLRRNATLSG) are Cytoplasmic-facing. A helical transmembrane segment spans residues 252 to 272 (YIFGTVWWGIALNMIAYFVAA). Over 273 to 392 (HAAGACWYLL…LESTTEWSEV (120 aa)) the chain is Extracellular. The helical transmembrane segment at 393 to 413 (VFNIIVLTSGLLLVTMLIGNI) threads the bilayer. The Cytoplasmic portion of the chain corresponds to 414–694 (KVFLHATTSK…KPNPDDFDDY (281 aa)). A nucleoside 3',5'-cyclic phosphate contacts are provided by residues 496-626 (LFQH…ARYY) and Asp-565. The interval 610-626 (FRYTFVNEKVKRSARYY) is calmodulin-binding. In terms of domain architecture, IQ spans 631 to 660 (RTWAAVAVQLAWRRYKHRLTLTSLSFIRPR).

This sequence belongs to the cyclic nucleotide-gated cation channel (TC 1.A.1.5) family. As to quaternary structure, homotetramer or heterotetramer.

It localises to the cell membrane. Acts as a cyclic nucleotide-gated ion channel. Permeable to potassium and sodium in a cyclic nucleotide-dependent fashion (cAMP or cGMP). Might constitute a common downstream component of the signaling pathways leading to hypersensitive response (HR). In Arabidopsis thaliana (Mouse-ear cress), this protein is Cyclic nucleotide-gated ion channel 4 (CNGC4).